The primary structure comprises 315 residues: Ribosomal RNA large subunit methyltransferase F (315 aa).

The protein belongs to the methyltransferase superfamily. METTL16/RlmF family.

The protein resides in the cytoplasm. The enzyme catalyses adenosine(1618) in 23S rRNA + S-adenosyl-L-methionine = N(6)-methyladenosine(1618) in 23S rRNA + S-adenosyl-L-homocysteine + H(+). Functionally, specifically methylates the adenine in position 1618 of 23S rRNA. This chain is Ribosomal RNA large subunit methyltransferase F, found in Aeromonas salmonicida (strain A449).